Reading from the N-terminus, the 499-residue chain is Dipeptide and tripeptide permease A (499 aa).

The Cytoplasmic segment spans residues 1 to 34 (MSTANKKPAESVSMNAFKQPRSFYLIFSIELWER). Residues 35–55 (FGFYGLQGIMAVYLVKQLGMS) traverse the membrane as a helical segment. Residues 56 to 59 (EADS) are Periplasmic-facing. The helical transmembrane segment at 60–80 (ITLFSSFSALVYGLVAIGGWL) threads the bilayer. At 81 to 89 (GDKVLGTKR) the chain is on the cytoplasmic side. The helical transmembrane segment at 90 to 110 (VIMLGTIVLAIGYALVAWSGH) threads the bilayer. Asp111 is a topological domain (periplasmic). The chain crosses the membrane as a helical span at residues 112–132 (AAIVYFGMATIAVGNGLFKAN). Residues 133–153 (PSALLSTCYEKDDPRLDGAFT) lie on the Cytoplasmic side of the membrane. Residues 154–174 (MYYMAINIGSFFSMLATPWLA) form a helical membrane-spanning segment. Over 175–178 (EKFG) the chain is Periplasmic. The chain crosses the membrane as a helical span at residues 179–199 (WSVAFSLSFVGMLITLVNFIF). Residues 200–217 (CKKWVKDYGSKPDFAPLH) are Cytoplasmic-facing. The chain crosses the membrane as a helical span at residues 218–238 (VGKLLATIVGIVVLVAIATWL). The Periplasmic portion of the chain corresponds to 239–246 (LHNQGIAR). A helical transmembrane segment spans residues 247-267 (LVLGVVALGIVIIFAKEAFAM). At 268 to 274 (QGAARRK) the chain is on the cytoplasmic side. Residues 275–295 (MIVAFILMLEAIVFFVLYQQM) traverse the membrane as a helical segment. At 296–320 (PTSLNFFAIRNVEHSILGIAFQPEQ) the chain is on the periplasmic side. A helical transmembrane segment spans residues 321-341 (FQALNPFWIMIGSPILAAIYN). Residues 342 to 350 (KMGDRLPMP) are Cytoplasmic-facing. Residues 351–371 (FKFTIGMLLCSGAFLVLPLGA) traverse the membrane as a helical segment. Residues 372-383 (KFASEAGIVSVN) are Periplasmic-facing. A helical membrane pass occupies residues 384-404 (WLILSYALQSIGELMISGLGL). At 405-414 (AMVAQLVPQR) the chain is on the cytoplasmic side. The helical transmembrane segment at 415–435 (LMGFIMGSWFLTTAGAAMIAG) threads the bilayer. Over 436 to 459 (KVANLMAVPENVSDPLQSLEVYGR) the chain is Periplasmic. A helical transmembrane segment spans residues 460–480 (VFMQIGIATGVIAVLMLLTAP). Over 481–499 (LLNRMTQEDKPKETDTAHA) the chain is Cytoplasmic.

It belongs to the major facilitator superfamily. Proton-dependent oligopeptide transporter (POT/PTR) (TC 2.A.17) family. DtpA subfamily.

The protein resides in the cell inner membrane. In terms of biological role, proton-dependent permease that transports di- and tripeptides. The chain is Dipeptide and tripeptide permease A from Cronobacter turicensis (strain DSM 18703 / CCUG 55852 / LMG 23827 / z3032).